The sequence spans 794 residues: Sucrose synthase (794 aa).

The interval Met-263–Thr-742 is GT-B glycosyltransferase.

The protein belongs to the glycosyltransferase 1 family. Homotetramer.

It carries out the reaction an NDP-alpha-D-glucose + D-fructose = a ribonucleoside 5'-diphosphate + sucrose + H(+). The catalysed reaction is ADP-alpha-D-glucose + D-fructose = sucrose + ADP + H(+). Inhibited by GDP over 10 mM and by over 2 mM MgCl(2). In terms of biological role, catalyzes the reversible conversion of sucrose and a nucleotide disphosphate (NDP) into fructose and NDP-glucose; although the reaction is freely reversible in vitro, the physiological reaction seems to be sucrose cleavage. Unlike characterized plant enzymes prefers ADP as a cosubstrate, whereas plants prefer UDP. The KM for sucrose is 8-fold lower in the presence of ADP than UDP. Its preference for ADP over UDP suggests it may directly link sucrose and glycogen metabolism. The chain is Sucrose synthase (ss2) from Nitrosomonas europaea (strain ATCC 19718 / CIP 103999 / KCTC 2705 / NBRC 14298).